We begin with the raw amino-acid sequence, 781 residues long: Poly(ADP-ribose) glycohydrolase 1 (781 aa).

Disordered stretches follow at residues 28–87 (AHQV…VSEN), 102–131 (SLDNVTERSEHTLDNHKSTEPMEEDVNNKS), and 206–232 (ADSTFVGEDSKNQRQSGTTSDEVDADS). A compositionally biased stretch (basic and acidic residues) spans 106-121 (VTERSEHTLDNHKSTE).

This sequence belongs to the poly(ADP-ribose) glycohydrolase family. In terms of tissue distribution, expressed in head and tail neurons. Also detected in the central nerve cord and motor neurons.

It is found in the nucleus. It catalyses the reaction [(1''-&gt;2')-ADP-alpha-D-ribose](n) + H2O = [(1''-&gt;2')-ADP-alpha-D-ribose](n-1) + ADP-D-ribose. In terms of biological role, poly(ADP-ribose) synthesized after DNA damage is only present transiently and is rapidly degraded by poly(ADP-ribose) glycohydrolase. Poly(ADP-ribose) metabolism may be required for maintenance of the normal function of neuronal cells. The polypeptide is Poly(ADP-ribose) glycohydrolase 1 (Caenorhabditis elegans).